The chain runs to 60 residues: uncharacterized protein (60 aa).

A signal peptide spans 1-21 (MNKLLKLFFITIIIYNNIAFA).

This is an uncharacterized protein from Rickettsia prowazekii (strain Madrid E).